A 356-amino-acid polypeptide reads, in one-letter code: MGLCQSEEEKVGSQKSRAIDKEIKQNQSNDERTVKLLLLGAGECGKSTVLKQMRLLTSKTYTADELEAQAKLVFTNIVIEMDHIVKAMPSAHFNFTDPMREHDVHMLTLYIKDMQHKSFHADAAEHVAKLWKDPVIKRLYAERRERNIRDIGDNTEYFFENLDRIAKPDYSPNSMDTLLLRTKTTGIVEVQFEIKKVKFRVFDVGGQRSERKKWIHCFEDVNAIIFIAALSEYNEVLFEDETTNRMIESMRLFESICNSRWFHNTNIILFLNKKDLFEDKIKKENITKAFPEYRGAQNYEETVAFIKQKFEALSNNPKKTFYVHETCATDTNQVQKILDSVISMIIQSNLHKSGLY.

Residues 1–25 (MGLCQSEEEKVGSQKSRAIDKEIKQ) are disordered. G2 carries N-myristoyl glycine lipidation. C4 is lipidated: S-palmitoyl cysteine. The span at 7–25 (EEEKVGSQKSRAIDKEIKQ) shows a compositional bias: basic and acidic residues. The 325-residue stretch at 14-338 (QKSRAIDKEI…TDTNQVQKIL (325 aa)) folds into the G-alpha domain. Residues 17–30 (RAIDKEIKQNQSND) form a G1 motif region. 13 residues coordinate GTP: Q25, Q27, S28, N29, D30, V135, E160, A166, V188, E254, S255, C257, and F310. N29 is a Mg(2+) binding site. Residues 158–166 (FFENLDRIA) form a G2 motif region. Position 166 (A166) interacts with Mg(2+). A G3 motif region spans residues 181 to 190 (RTKTTGIVEV). Positions 250 to 257 (MRLFESIC) are G4 motif. Residues 308-313 (QKFEAL) form a G5 motif region.

The protein belongs to the G-alpha family. G(q) subfamily. G proteins are composed of 3 units; alpha, beta and gamma. The alpha chain contains the guanine nucleotide binding site. Mg(2+) serves as cofactor.

Guanine nucleotide-binding proteins (G proteins) are involved as modulators or transducers in various transmembrane signaling systems. Involved in behavioral responses to P.aeruginosa by controlling the expression of daf-7, a member of the TGF-beta family, in ASJ sensory neurons. The protein is Guanine nucleotide-binding protein alpha-2 subunit (gpa-2) of Caenorhabditis briggsae.